The sequence spans 185 residues: Cytidylate kinase (185 aa).

8–16 lines the ATP pocket; that stretch reads GPPGSGKTT.

Belongs to the cytidylate kinase family. Type 2 subfamily.

The protein resides in the cytoplasm. The enzyme catalyses CMP + ATP = CDP + ADP. The catalysed reaction is dCMP + ATP = dCDP + ADP. The polypeptide is Cytidylate kinase (Desulfurococcus amylolyticus (strain DSM 18924 / JCM 16383 / VKM B-2413 / 1221n) (Desulfurococcus kamchatkensis)).